Here is a 950-residue protein sequence, read N- to C-terminus: Protocadherin alpha-1 (950 aa).

An N-terminal signal peptide occupies residues 1-29 (MVFSRRGGLGARDLLLWLLLLAAWEVGSG). 6 consecutive Cadherin domains span residues 30–133 (QLHY…PPVF), 157–242 (AADA…APLF), 243–350 (DQAV…APEL), 351–455 (AVTS…APAF), 456–565 (AQPE…APAL), and 588–678 (GHVV…APKA). Residues 30-697 (QLHYSIPEEA…GPEAALVDVN (668 aa)) are Extracellular-facing. 2 N-linked (GlcNAc...) asparagine glycosylation sites follow: Asn257 and Asn265. N-linked (GlcNAc...) asparagine glycosylation occurs at Asn548. The chain crosses the membrane as a helical span at residues 698 to 718 (VYLIIAICAVSSLLVLTLLLY). At 719 to 950 (TALRCSVPPT…GNSTTDNSDQ (232 aa)) the chain is on the cytoplasmic side. PXXP repeat units follow at residues 734–737 (PGKP), 799–802 (PRQP), 832–835 (PGGP), 873–876 (PGNP), and 891–894 (PGSP). A 5 X 4 AA repeats of P-X-X-P region spans residues 734 to 894 (PGKPTLVCSS…PDKFIIPGSP (161 aa)). Disordered stretches follow at residues 752–808 (QQRR…DWRY), 828–856 (LRAG…EVSP), and 871–890 (YGPG…KFII). Positions 900 to 950 (RQEPTNSQIDKSDFITFGKKEETKKKKKKKKGNKTQEKKEKGNSTTDNSDQ) are disordered. Positions 909–923 (DKSDFITFGKKEETK) are enriched in basic and acidic residues.

It is found in the cell membrane. Its subcellular location is the secreted. Its function is as follows. Potential calcium-dependent cell-adhesion protein. May be involved in the establishment and maintenance of specific neuronal connections in the brain. This is Protocadherin alpha-1 (PCDHA1) from Homo sapiens (Human).